The primary structure comprises 96 residues: Co-chaperonin GroES (96 aa).

Belongs to the GroES chaperonin family. As to quaternary structure, heptamer of 7 subunits arranged in a ring. Interacts with the chaperonin GroEL.

The protein localises to the cytoplasm. Functionally, together with the chaperonin GroEL, plays an essential role in assisting protein folding. The GroEL-GroES system forms a nano-cage that allows encapsulation of the non-native substrate proteins and provides a physical environment optimized to promote and accelerate protein folding. GroES binds to the apical surface of the GroEL ring, thereby capping the opening of the GroEL channel. In Neisseria meningitidis serogroup B (strain ATCC BAA-335 / MC58), this protein is Co-chaperonin GroES.